A 107-amino-acid polypeptide reads, in one-letter code: U1-lycotoxin-Ls1g (107 aa).

An N-terminal signal peptide occupies residues 1 to 20 (MMKVLVVVALLVTLISYSSS). Residues 21-41 (EGIDDLEADELLSLMANEQTR) constitute a propeptide that is removed on maturation. Cystine bridges form between Cys51/Cys68, Cys58/Cys86, and Cys70/Cys84.

This sequence belongs to the neurotoxin 19 (CSTX) family. 04 (U1-Lctx) subfamily. Expressed by the venom gland.

Its subcellular location is the secreted. This Lycosa singoriensis (Wolf spider) protein is U1-lycotoxin-Ls1g.